Consider the following 177-residue polypeptide: Large ribosomal subunit protein uL6 (177 aa).

The protein belongs to the universal ribosomal protein uL6 family. Part of the 50S ribosomal subunit.

This protein binds to the 23S rRNA, and is important in its secondary structure. It is located near the subunit interface in the base of the L7/L12 stalk, and near the tRNA binding site of the peptidyltransferase center. The chain is Large ribosomal subunit protein uL6 from Buchnera aphidicola subsp. Acyrthosiphon kondoi (Acyrthosiphon kondoi symbiotic bacterium).